We begin with the raw amino-acid sequence, 106 residues long: UPF0145 protein Dhaf_3855 (106 aa).

The protein belongs to the UPF0145 family.

This Desulfitobacterium hafniense (strain DSM 10664 / DCB-2) protein is UPF0145 protein Dhaf_3855.